Reading from the N-terminus, the 364-residue chain is Medium-wave-sensitive opsin 1 (364 aa).

The disordered stretch occupies residues 1 to 24 (MAQRWDPQRLAGGQPQDSHEDSTQ). Residues 1–52 (MAQRWDPQRLAGGQPQDSHEDSTQSSIFTYTNSNATRGPFEGPNYHIAPRWV) are Extracellular-facing. A required for 11-cis-retinal regeneration region spans residues 17-43 (DSHEDSTQSSIFTYTNSNATRGPFEGP). N34 carries an N-linked (GlcNAc...) asparagine glycan. A helical membrane pass occupies residues 53 to 77 (YHITSTWMIIVVIASVFTNGLVLVA). The Cytoplasmic portion of the chain corresponds to 78-89 (TMKFKKLRHPLN). A helical membrane pass occupies residues 90 to 115 (WILVNLAIADLAETVIASTISVVNQL). At 116-129 (YGYFVLGHPLCVVE) the chain is on the extracellular side. Residues C126 and C203 are joined by a disulfide bond. A helical membrane pass occupies residues 130–149 (GYTVSVCGITGLWSLAIISW). Residues 150–168 (ERWLVVCKPFGNMRFDAKL) lie on the Cytoplasmic side of the membrane. Residues 169-192 (AIVGIAFSWIWSAVWTAPPIFGWS) form a helical membrane-spanning segment. Residues 193–218 (RYWPYGLKTSCGPDVFSGTSYPGVQS) lie on the Extracellular side of the membrane. A helical transmembrane segment spans residues 219–246 (YMMVLMVTCCIIPLSIIILCYLQVWLAI). Topologically, residues 247-268 (RAVAKQQKESESTQKAEKEVTR) are cytoplasmic. A helical transmembrane segment spans residues 269–292 (MVVVMVFAYCLCWGPYTFFACFAT). Topologically, residues 293 to 300 (ANPGYAFH) are extracellular. Residues 301–320 (PLVAALPAYFAKSATIYNPI) form a helical membrane-spanning segment. K312 carries the post-translational modification N6-(retinylidene)lysine. At 321 to 364 (IYVFMNRQFRNCILQLFGKKVDDTSELSSASKTEASSVSSVSPA) the chain is on the cytoplasmic side.

Belongs to the G-protein coupled receptor 1 family. Opsin subfamily. In terms of assembly, monomer. Homodimer. Homotetramer. In terms of processing, O-glycosylated. Phosphorylated on some or all of the serine and threonine residues present in the C-terminal region. As to expression, expressed in cone photoreceptor cells.

The protein resides in the membrane. In terms of biological role, visual pigments are the light-absorbing molecules that mediate vision. They consist of an apoprotein, opsin, covalently linked to cis-retinal. May increase spectral sensitivity in dim light. The chain is Medium-wave-sensitive opsin 1 (OPN1MW) from Sciurus carolinensis (Eastern gray squirrel).